The sequence spans 196 residues: MKVAVVKYNAGNIRSVDYALKRLGVEAVITADKEILQSADKVIFPGVGEAGTTMNHLKATGLDELIKNLRQPVFGICLGMQLMCRHSEEGEVDCLNIFDVDVKRFVPQKHEDKVPHMGWNTIGKTNSKLFEGFTEEEFVYFVHSFYVPVCDFTAAETDYIHPFSAALHKDNFYATQFHPEKSGKTGERVLRNFLDL.

The Glutamine amidotransferase type-1 domain occupies 2 to 196; sequence KVAVVKYNAG…ERVLRNFLDL (195 aa). The active-site Nucleophile is Cys-77. Active-site residues include His-178 and Glu-180.

As to quaternary structure, heterodimer of HisH and HisF.

It is found in the cytoplasm. It carries out the reaction 5-[(5-phospho-1-deoxy-D-ribulos-1-ylimino)methylamino]-1-(5-phospho-beta-D-ribosyl)imidazole-4-carboxamide + L-glutamine = D-erythro-1-(imidazol-4-yl)glycerol 3-phosphate + 5-amino-1-(5-phospho-beta-D-ribosyl)imidazole-4-carboxamide + L-glutamate + H(+). The catalysed reaction is L-glutamine + H2O = L-glutamate + NH4(+). It participates in amino-acid biosynthesis; L-histidine biosynthesis; L-histidine from 5-phospho-alpha-D-ribose 1-diphosphate: step 5/9. Functionally, IGPS catalyzes the conversion of PRFAR and glutamine to IGP, AICAR and glutamate. The HisH subunit catalyzes the hydrolysis of glutamine to glutamate and ammonia as part of the synthesis of IGP and AICAR. The resulting ammonia molecule is channeled to the active site of HisF. This Bacteroides thetaiotaomicron (strain ATCC 29148 / DSM 2079 / JCM 5827 / CCUG 10774 / NCTC 10582 / VPI-5482 / E50) protein is Imidazole glycerol phosphate synthase subunit HisH.